Consider the following 135-residue polypeptide: Small ribosomal subunit protein bS16m (135 aa).

The transit peptide at 1–34 directs the protein to the mitochondrion; the sequence is MVQLTTVLCKAYRGGHLTIRLALGGCTNRPFYRI. The residue at position 130 (threonine 130) is a Phosphothreonine.

Belongs to the bacterial ribosomal protein bS16 family. As to quaternary structure, component of the mitochondrial ribosome small subunit (28S) which comprises a 12S rRNA and about 30 distinct proteins.

It localises to the mitochondrion. The chain is Small ribosomal subunit protein bS16m (MRPS16) from Bos taurus (Bovine).